A 312-amino-acid polypeptide reads, in one-letter code: Pantothenate kinase (312 aa).

92-99 (GSVAVGKS) lines the ATP pocket.

Belongs to the prokaryotic pantothenate kinase family.

Its subcellular location is the cytoplasm. It carries out the reaction (R)-pantothenate + ATP = (R)-4'-phosphopantothenate + ADP + H(+). The protein operates within cofactor biosynthesis; coenzyme A biosynthesis; CoA from (R)-pantothenate: step 1/5. The sequence is that of Pantothenate kinase (coaA) from Vibrio cholerae serotype O1 (strain ATCC 39315 / El Tor Inaba N16961).